The chain runs to 437 residues: Enolase (437 aa).

(2R)-2-phosphoglycerate is bound at residue Gln-162. The active-site Proton donor is the Glu-204. Mg(2+)-binding residues include Asp-251, Glu-297, and Asp-324. 4 residues coordinate (2R)-2-phosphoglycerate: Lys-349, Arg-378, Ser-379, and Lys-400. Residue Lys-349 is the Proton acceptor of the active site.

The protein belongs to the enolase family. Requires Mg(2+) as cofactor.

It is found in the cytoplasm. The protein localises to the secreted. The protein resides in the cell surface. The catalysed reaction is (2R)-2-phosphoglycerate = phosphoenolpyruvate + H2O. It functions in the pathway carbohydrate degradation; glycolysis; pyruvate from D-glyceraldehyde 3-phosphate: step 4/5. Functionally, catalyzes the reversible conversion of 2-phosphoglycerate (2-PG) into phosphoenolpyruvate (PEP). It is essential for the degradation of carbohydrates via glycolysis. The protein is Enolase of Chlorobium luteolum (strain DSM 273 / BCRC 81028 / 2530) (Pelodictyon luteolum).